A 146-amino-acid polypeptide reads, in one-letter code: Transcriptional regulator MraZ (146 aa).

SpoVT-AbrB domains follow at residues 5–52 (SAAL…PRAE) and 81–124 (AAEI…KEES).

This sequence belongs to the MraZ family. Forms oligomers.

It is found in the cytoplasm. It localises to the nucleoid. This Alcanivorax borkumensis (strain ATCC 700651 / DSM 11573 / NCIMB 13689 / SK2) protein is Transcriptional regulator MraZ.